The chain runs to 1056 residues: E3 SUMO-protein ligase ZNF451 (1056 aa).

The disordered stretch occupies residues 1-39; the sequence is MGDPGPEIIESVPPAGPEASESTTDENEDDIQFVSEGPL. The tract at residues 1-246 is sufficient for E3 SUMO-protein ligase activity; it reads MGDPGPEIIE…AADGHSNSLL (246 aa). The important for interaction with SUMO1 and SUMO2 stretch occupies residues 1-344; that stretch reads MGDPGPEIIE…RVRCQNAGPV (344 aa). Positions 30–37 are interaction with SUMO2 1; that stretch reads DIQFVSEG. The short motif at 38–41 is the PLRP element; it reads PLRP. Positions 42 to 50 are interaction with SUMO2 2; sequence VLEYIDLVS. Residues lysine 75, lysine 77, lysine 106, lysine 139, and lysine 153 each participate in a glycyl lysine isopeptide (Lys-Gly) (interchain with G-Cter in SUMO2) cross-link. Serine 155 bears the Phosphoserine mark. Arginine 158 bears the Omega-N-methylarginine mark. Residue lysine 167 forms a Glycyl lysine isopeptide (Lys-Gly) (interchain with G-Cter in SUMO2) linkage. Positions 168-521 are important for interaction with SMAD4; it reads PILCPIMHCN…HMSRFHGGAH (354 aa). The segment at 169–195 adopts a C2H2-type 1 zinc-finger fold; it reads ILCPIMHCNKEFDNGHLLLGHLKRFDH. The C2H2-type 2; degenerate zinc finger occupies 212–234; the sequence is FACAVCYEHFVTQQQYKDHLLSR. Residues 253-277 form a C2H2-type 3 zinc finger; that stretch reads YACPQCFLLFSTKDECLKHMSTKNH. Glycyl lysine isopeptide (Lys-Gly) (interchain with G-Cter in SUMO2) cross-links involve residues lysine 270, lysine 275, lysine 283, lysine 288, lysine 301, and lysine 309. A C2H2-type 4; atypical zinc finger spans residues 315 to 338; the sequence is VKCVACHQTLRSHMELTAHFRVRC. Residues 362–385 form a C2H2-type 5 zinc finger; sequence GYCSDCNQVFMDVASTQSHKNSGH. Lysine 420 is covalently cross-linked (Glycyl lysine isopeptide (Lys-Gly) (interchain with G-Cter in SUMO2)). Phosphoserine is present on serine 429. Residue lysine 431 forms a Glycyl lysine isopeptide (Lys-Gly) (interchain with G-Cter in SUMO2) linkage. C2H2-type zinc fingers lie at residues 494-517 and 527-550; these read YKCV…SRFH and FWCR…TEFH. Residues lysine 539 and lysine 583 each participate in a glycyl lysine isopeptide (Lys-Gly) (interchain with G-Cter in SUMO2) cross-link. Residues 604-629 form a C2H2-type 8; atypical zinc finger; sequence WQCRICEDMFESQECVKQHCMSLTSH. 2 C2H2-type zinc fingers span residues 634 to 657 and 665 to 688; these read YSCA…QDEH and YFCG…KEHH. Lysine 645 is covalently cross-linked (Glycyl lysine isopeptide (Lys-Gly) (interchain with G-Cter in SUMO2)). A Glycyl lysine isopeptide (Lys-Gly) (interchain with G-Cter in SUMO1); alternate cross-link involves residue lysine 704. Lysine 704 participates in a covalent cross-link: Glycyl lysine isopeptide (Lys-Gly) (interchain with G-Cter in SUMO2); alternate. Glycyl lysine isopeptide (Lys-Gly) (interchain with G-Cter in SUMO2) cross-links involve residues lysine 729 and lysine 746. C2H2-type zinc fingers lie at residues 751–774 and 787–810; these read FRCS…CQVH and IKCG…HRKH. Residues lysine 788, lysine 815, lysine 843, lysine 849, lysine 947, lysine 988, and lysine 989 each participate in a glycyl lysine isopeptide (Lys-Gly) (interchain with G-Cter in SUMO2) cross-link. Disordered regions lie at residues 806-830 and 839-858; these read FHRK…STCQ and EKNL…KGAE. Residues 849 to 858 show a composition bias toward basic and acidic residues; it reads KHSDVEKGAE. The interval 1019–1045 is disordered; that stretch reads KECDSDDSSGMKGSPAEELRATEDVEL. Residues 1033–1045 show a composition bias toward basic and acidic residues; sequence PAEELRATEDVEL. The tract at residues 1045–1056 is important for ubiquitin binding; it reads LEEAIRRSLEEM.

It belongs to the krueppel C2H2-type zinc-finger protein family. Homooligomer. Interacts (via N-terminal region) with SUMO1. Interacts (via N-terminal region) with SUMO2. Interacts simultaneously with two SUMO2 chains. Identified in a complex with SUMO2 and UBE2I/UBC9, where one ZNF451 interacts with one UBE2I/UBC9 and two SUMO2 chains, one bound to the UBE2I/UBC9 active site and the other to another region of the same UBE2I/UBC9 molecule. Interacts (via C-terminus) with ubiquitin. Interacts (via N-terminal zinc-finger domains) with SMAD4 (via MH2 domain). Interacts with SMAD2 and SMAD3. Identified in a complex that contains at least ZNF451, SMAD2, SMAD3 and SMAD4. Interacts with EP300. Inhibits interaction between EP300 and the SMAD4 complex. Interacts with SIMC1. In terms of processing, sumoylated. Predominantly sumoylated on the N-terminal region that is important for interaction with SUMO1 and SUMO2. Sumoylation is important for localization in nuclear granules; desumoylation leads to diffuse nucleoplasmic location. Autosumoylated (in vitro). Sumoylation enhances E3 SUMO-protein ligase activity.

It is found in the nucleus. The protein resides in the PML body. It localises to the nucleoplasm. Its pathway is protein modification; protein sumoylation. Functionally, E3 SUMO-protein ligase; has a preference for SUMO2 and SUMO3 and facilitates UBE2I/UBC9-mediated sumoylation of target proteins. Plays a role in protein SUMO2 modification in response to stress caused by DNA damage and by proteasome inhibitors (in vitro). Required for MCM4 sumoylation. Has no activity with SUMO1. Preferentially transfers an additional SUMO2 chain onto the SUMO2 consensus site 'Lys-11'. Negatively regulates transcriptional activation mediated by the SMAD4 complex in response to TGF-beta signaling. Inhibits EP300-mediated acetylation of histone H3 at 'Lys-9'. Plays a role in regulating the transcription of AR targets. The protein is E3 SUMO-protein ligase ZNF451 (Znf451) of Mus musculus (Mouse).